The sequence spans 578 residues: Asparagine synthetase [glutamine-hydrolyzing] 2 (578 aa).

The For GATase activity role is filled by cysteine 2. In terms of domain architecture, Glutamine amidotransferase type-2 spans 2-185 (CGILAVLGCI…PGHIYSSKQG (184 aa)). Residues 50-54 (RLAII), 75-77 (NGE), and aspartate 98 contribute to the L-glutamine site. One can recognise an Asparagine synthetase domain in the interval 210 to 450 (LRNAFEKAVI…LPKHILYRQK (241 aa)). ATP is bound by residues leucine 231, isoleucine 267, and 341 to 342 (SG).

In terms of tissue distribution, expressed in the vascular region adjacent to leaf mesophyll cells in the companion cell-sieve tube element complex.

It carries out the reaction L-aspartate + L-glutamine + ATP + H2O = L-asparagine + L-glutamate + AMP + diphosphate + H(+). It participates in amino-acid biosynthesis; L-asparagine biosynthesis. In terms of biological role, essential for nitrogen assimilation, distribution and remobilization within the plant via the phloem. This Arabidopsis thaliana (Mouse-ear cress) protein is Asparagine synthetase [glutamine-hydrolyzing] 2 (ASN2).